Here is a 208-residue protein sequence, read N- to C-terminus: Small ribosomal subunit protein uS9c (208 aa).

A chloroplast-targeting transit peptide spans 1–52 (MASITNLASSLSSLSFSSQVSQRPNTISFPRANSVFALPAKSARRASLSITA).

This sequence belongs to the universal ribosomal protein uS9 family.

Its subcellular location is the plastid. It localises to the chloroplast. In terms of biological role, binds directly to 16S ribosomal RNA. This chain is Small ribosomal subunit protein uS9c (RPS9), found in Arabidopsis thaliana (Mouse-ear cress).